Consider the following 595-residue polypeptide: NADH-quinone oxidoreductase subunit C/D (595 aa).

Residues 1–186 form an NADH dehydrogenase I subunit C region; it reads MVTDNSKATD…TPYFLNNAKQ (186 aa). The segment at 210–595 is NADH dehydrogenase I subunit D; that stretch reads DFMFLNLGPN…IDIVMADTDR (386 aa).

In the N-terminal section; belongs to the complex I 30 kDa subunit family. It in the C-terminal section; belongs to the complex I 49 kDa subunit family. NDH-1 is composed of 13 different subunits. Subunits NuoB, CD, E, F, and G constitute the peripheral sector of the complex.

The protein localises to the cell inner membrane. The enzyme catalyses a quinone + NADH + 5 H(+)(in) = a quinol + NAD(+) + 4 H(+)(out). In terms of biological role, NDH-1 shuttles electrons from NADH, via FMN and iron-sulfur (Fe-S) centers, to quinones in the respiratory chain. The immediate electron acceptor for the enzyme in this species is believed to be ubiquinone. Couples the redox reaction to proton translocation (for every two electrons transferred, four hydrogen ions are translocated across the cytoplasmic membrane), and thus conserves the redox energy in a proton gradient. This is NADH-quinone oxidoreductase subunit C/D from Psychrobacter sp. (strain PRwf-1).